The sequence spans 72 residues: MIIPWQGLAPDTLDNLIESFVLREGTDYGEHERSFEQKVADVKRQLQSGEAVLVWSELHETVNIMPKKQFRE.

The protein belongs to the UPF0270 family.

This is UPF0270 protein YheU from Salmonella agona (strain SL483).